Consider the following 286-residue polypeptide: Phosphate import ATP-binding protein PstB (286 aa).

An ABC transporter domain is found at 40–281 (VVAKDFSIFY…PRDRMTEDYI (242 aa)). An ATP-binding site is contributed by 72–79 (GPSGCGKS).

Belongs to the ABC transporter superfamily. Phosphate importer (TC 3.A.1.7) family. In terms of assembly, the complex is composed of two ATP-binding proteins (PstB), two transmembrane proteins (PstC and PstA) and a solute-binding protein (PstS).

Its subcellular location is the cell inner membrane. It catalyses the reaction phosphate(out) + ATP + H2O = ADP + 2 phosphate(in) + H(+). Its function is as follows. Part of the ABC transporter complex PstSACB involved in phosphate import. Responsible for energy coupling to the transport system. The sequence is that of Phosphate import ATP-binding protein PstB from Chlorobium luteolum (strain DSM 273 / BCRC 81028 / 2530) (Pelodictyon luteolum).